The following is a 191-amino-acid chain: Probable DNA-directed RNA polymerase subunit delta (191 aa).

Positions 14–83 (LSMIEVARAI…GDNKWGLRSW (70 aa)) constitute an HTH HARE-type domain. Composition is skewed to acidic residues over residues 119-133 (EDAIDYNDDDPEDEN) and 143-191 (YDND…ETND). Residues 119 to 191 (EDAIDYNDDD…DDDYEDETND (73 aa)) form a disordered region.

It belongs to the RpoE family. In terms of assembly, RNAP is composed of a core of 2 alpha, a beta and a beta' subunits. The core is associated with a delta subunit and one of several sigma factors.

Participates in both the initiation and recycling phases of transcription. In the presence of the delta subunit, RNAP displays an increased specificity of transcription, a decreased affinity for nucleic acids, and an increased efficiency of RNA synthesis because of enhanced recycling. This Streptococcus thermophilus (strain ATCC BAA-491 / LMD-9) protein is Probable DNA-directed RNA polymerase subunit delta.